The chain runs to 430 residues: Cysteate synthase (430 aa).

An N6-(pyridoxal phosphate)lysine modification is found at Lys106. Asn132 and Thr381 together coordinate pyridoxal 5'-phosphate.

Belongs to the threonine synthase family. Cysteate synthase subfamily. In terms of assembly, homotrimer. Pyridoxal 5'-phosphate is required as a cofactor.

The catalysed reaction is O-phospho-L-serine + sulfite + H(+) = L-cysteate + phosphate. The protein operates within cofactor biosynthesis; coenzyme M biosynthesis. In terms of biological role, specifically catalyzes the beta-elimination of phosphate from L-phosphoserine and the beta-addition of sulfite to the dehydroalanine intermediate to produce L-cysteate. This is Cysteate synthase from Methanoculleus marisnigri (strain ATCC 35101 / DSM 1498 / JR1).